A 327-amino-acid chain; its full sequence is Phage tubulin-like protein (327 aa).

GTP-binding positions include 14 to 15 (GA) and 107 to 109 (ASG). The segment at 303–327 (KANMRKRQSTLDVDDQATSSGLVFD) is disordered. The span at 318–327 (QATSSGLVFD) shows a compositional bias: polar residues.

Belongs to the FtsZ family. PhuZ subfamily. As to quaternary structure, homomultimer. Polymerizes in a strictly GTP-dependent manner.

It is found in the host cytoplasm. The catalysed reaction is GTP + H2O = GDP + phosphate + H(+). Its activity is regulated as follows. The non-hydrolyzable GTP analog GMPCPP stabilizes filaments, which never disassemble. A tubulin-like GTPase that forms filaments, which are required for positioning viral DNA and capsids in the middle of the host cell for optimal replication. The motor component of a partition system which pushes phage DNA (encased by protein gp105) to the center of the bacterial host cell. Also required for movement of phage capsids to the vicinity of the viral DNA and rotation of the encased viral DNA at midcell. Forms filaments during the lytic phase, which position phage DNA at the center of the bacterial host cell. Filaments have a three-stranded intertwined architecture and form a spindle-like cytoskeleton within the infected cell. Has GTPase activity. Filaments grow at the plus end and depolymerize at the minus end, a process called treadmilling, and switch from growing in a polar manner to catastrophic depolymerization, i.e. they display dynamic instability, like tubulin. In infected host cells the filament ends close to the cell pole are relatively stable, while the other end near the phage DNA is highly dynamic. Both capsid movement and DNA rotation probably require treadmilling. In Pseudomonas phage phiKZ, this protein is Phage tubulin-like protein.